The primary structure comprises 310 residues: Methionyl-tRNA formyltransferase (310 aa).

Position 112 to 115 (112 to 115) interacts with (6S)-5,6,7,8-tetrahydrofolate; sequence SLLP.

It belongs to the Fmt family.

The enzyme catalyses L-methionyl-tRNA(fMet) + (6R)-10-formyltetrahydrofolate = N-formyl-L-methionyl-tRNA(fMet) + (6S)-5,6,7,8-tetrahydrofolate + H(+). In terms of biological role, attaches a formyl group to the free amino group of methionyl-tRNA(fMet). The formyl group appears to play a dual role in the initiator identity of N-formylmethionyl-tRNA by promoting its recognition by IF2 and preventing the misappropriation of this tRNA by the elongation apparatus. The chain is Methionyl-tRNA formyltransferase from Pelagibacter ubique (strain HTCC1062).